The chain runs to 304 residues: MALCALASALRSLSLASPAITARVPTLLPVGQSNVLLQLPSALALPAHRPVHMSADRSAKFVSWKSRIKYTVKPVKMRKSGGRDHTGRIRVHGIGGGHKQNYRMIDFLRFRPEKGTEPEPFEEKVVVVRYDPCRSADIALVAGGSRKRWIIATENMKAGDTILNSNHIGRMAVAAQEGDAHPLGALPVGTLINNVESEPGRGAQYIRAAGTCGVLLRKVNGTAIIQLPSKRQMQVLESCTATVGRVSNVNHNQRVIGKAGRNRWLGKRPNSGLWQRKGGWAGRKIRPLPPMKSYVKLPSAAAQS.

The transit peptide at 1 to 60 (MALCALASALRSLSLASPAITARVPTLLPVGQSNVLLQLPSALALPAHRPVHMSADRSAK) directs the protein to the mitochondrion.

The protein belongs to the universal ribosomal protein uL2 family. In terms of assembly, component of the mitochondrial ribosome large subunit (39S) which comprises a 16S rRNA and about 50 distinct proteins.

It is found in the mitochondrion. The sequence is that of Large ribosomal subunit protein uL2m (Mrpl2) from Rattus norvegicus (Rat).